A 58-amino-acid chain; its full sequence is uncharacterized protein (58 aa).

The protein localises to the mitochondrion. This is an uncharacterized protein from Saccharomyces cerevisiae (strain ATCC 204508 / S288c) (Baker's yeast).